Reading from the N-terminus, the 391-residue chain is Phosphoglycerate kinase (391 aa).

Residues 21-23 (DLN), R36, 59-62 (HLGR), R113, and R146 contribute to the substrate site. ATP contacts are provided by residues K197, E319, and 345-348 (GGDT).

The protein belongs to the phosphoglycerate kinase family. In terms of assembly, monomer.

The protein localises to the cytoplasm. The catalysed reaction is (2R)-3-phosphoglycerate + ATP = (2R)-3-phospho-glyceroyl phosphate + ADP. The protein operates within carbohydrate degradation; glycolysis; pyruvate from D-glyceraldehyde 3-phosphate: step 2/5. The sequence is that of Phosphoglycerate kinase from Xanthomonas axonopodis pv. citri (strain 306).